A 547-amino-acid chain; its full sequence is Cytochrome P450 78A1 (547 aa).

Positions 84 to 94 are enriched in low complexity; it reads ASSRCPGAAAP. Residues 84 to 104 are disordered; it reads ASSRCPGAAAPRPRRDGPRRR. Residue Cys-490 participates in heme binding.

This sequence belongs to the cytochrome P450 family. It depends on heme as a cofactor. As to expression, shoot apex.

The sequence is that of Cytochrome P450 78A1 (CYP78A1) from Zea mays (Maize).